Reading from the N-terminus, the 1050-residue chain is FHIP family protein GE18198 (1050 aa).

A phosphoserine mark is found at Ser498 and Ser805. Disordered stretches follow at residues 800–827 (KGNE…GQLR), 865–888 (TSMF…SASS), 911–954 (TDGR…SGSN), and 968–995 (SNTT…SEPA). A compositionally biased stretch (polar residues) spans 808–826 (HHSQQQQMATNSGQQQGQL). Residues 872–888 (SASNTSTTPPNGSSASS) show a composition bias toward low complexity. Over residues 918–935 (HAQTSAGTCETSLSTQPQ) the composition is skewed to polar residues. The span at 941-954 (TGAIATSATASGSN) shows a compositional bias: low complexity. The span at 968 to 977 (SNTTTHSAST) shows a compositional bias: polar residues.

Belongs to the FHIP family.

The protein is FHIP family protein GE18198 of Drosophila yakuba (Fruit fly).